Here is a 284-residue protein sequence, read N- to C-terminus: 2,3,4,5-tetrahydropyridine-2,6-dicarboxylate N-succinyltransferase (284 aa).

Residues arginine 111 and aspartate 148 each coordinate substrate.

Belongs to the transferase hexapeptide repeat family. As to quaternary structure, homotrimer.

It is found in the cytoplasm. It carries out the reaction (S)-2,3,4,5-tetrahydrodipicolinate + succinyl-CoA + H2O = (S)-2-succinylamino-6-oxoheptanedioate + CoA. Its pathway is amino-acid biosynthesis; L-lysine biosynthesis via DAP pathway; LL-2,6-diaminopimelate from (S)-tetrahydrodipicolinate (succinylase route): step 1/3. This Mesorhizobium japonicum (strain LMG 29417 / CECT 9101 / MAFF 303099) (Mesorhizobium loti (strain MAFF 303099)) protein is 2,3,4,5-tetrahydropyridine-2,6-dicarboxylate N-succinyltransferase.